The chain runs to 1647 residues: Ras GTPase-activating-like protein IQG1 (1647 aa).

The segment at 18–51 is disordered; that stretch reads DTTATTTTTTTSNVLQPSNRLNSPTKFNRKSLDN. Positions 19-28 are enriched in low complexity; that stretch reads TTATTTTTTT. Positions 29 to 43 are enriched in polar residues; it reads SNVLQPSNRLNSPTK. Ser48 is subject to Phosphoserine. Thr66, Thr72, and Thr82 each carry phosphothreonine. Phosphoserine occurs at positions 83, 91, and 139. Polar residues predominate over residues 143–162; the sequence is FNTQSNVHTPLKQLNQPIGT. The segment at 143-175 is disordered; sequence FNTQSNVHTPLKQLNQPIGTPSSSSLSPAKNAS. Over residues 163–175 the composition is skewed to low complexity; the sequence is PSSSSLSPAKNAS. 3 positions are modified to phosphoserine: Ser165, Ser167, and Ser169. The region spanning 184 to 291 is the Calponin-homology (CH) domain; it reads LCRIEAIKQW…FCLHALSYIL (108 aa). Positions 326-427 are disordered; sequence PLPNFSSADT…STSNAKLELH (102 aa). The segment covering 342 to 355 has biased composition (low complexity); the sequence is TSNNNSSTTSATAA. At Thr367 the chain carries Phosphothreonine. The span at 368-379 shows a compositional bias: low complexity; that stretch reads PSPLKRPQQLQK. Ser369 carries the phosphoserine modification. 2 stretches are compositionally biased toward basic and acidic residues: residues 380–392 and 402–413; these read KQLELVEDNKPEL and ISRDDPFTDRVD. Phosphoserine is present on residues Ser433 and Ser440. 9 consecutive IQ domains span residues 467–478, 528–539, 556–567, 586–597, 616–627, 642–653, 672–683, 734–745, and 764–775; these read FQSLARGAVFRY, LQSIIRKNFVIN, LQSLIRGKLTRD, FQSLVRMKSIYS, LQSIARSQLYHR, IQSIIRRNAVIE, LQSIARGGVART, VQTLFRGVLSRY, and LQSVARGKLMRG. The stretch at 841–919 forms a coiled coil; it reads LSDLKDLIIE…KKIELWQTLF (79 aa). One can recognise a Ras-GAP domain in the interval 958 to 1223; sequence PVRDSSITYH…DTVKSIISQA (266 aa). 5 positions are modified to phosphoserine: Ser1064, Ser1068, Ser1088, Ser1383, and Ser1385.

As to quaternary structure, interacts with myosin MYO1 and its light chain MLC1. Interacts with BNI1. Interacts with BNR1. Interacts with CLB2. Interacts with CLB4. Interacts with CDC28. Post-translationally, hyperphosphorylated. Phosphorylation is cell cycle-dependent and peaks at the time of cytokinesis. Contains 21 consensus sites for cyclin-dependent kinases (CDKs). At least some of them are phosphorylated by the CLB2-CDC28 kinase complex. Mutation of 15 of the phosphorylation sites to Ala caused both premature assembly and delayed disassembly of the actomyosin ring, blocked interaction with the actin-nucleating proteins BNI1 and BNR1, and resulted in defects in cytokinesis.

It localises to the bud neck. Required for the assembly and the contraction of the actomyosin ring at the bud neck during cytokinesis. This is Ras GTPase-activating-like protein IQG1 (IQG1) from Candida albicans (strain SC5314 / ATCC MYA-2876) (Yeast).